The primary structure comprises 127 residues: Large ribosomal subunit protein bL17 (127 aa).

The protein belongs to the bacterial ribosomal protein bL17 family. In terms of assembly, part of the 50S ribosomal subunit. Contacts protein L32.

The chain is Large ribosomal subunit protein bL17 from Aeromonas hydrophila subsp. hydrophila (strain ATCC 7966 / DSM 30187 / BCRC 13018 / CCUG 14551 / JCM 1027 / KCTC 2358 / NCIMB 9240 / NCTC 8049).